Reading from the N-terminus, the 557-residue chain is Formate--tetrahydrofolate ligase 2 (557 aa).

Residue 66-73 (TPAGEGKT) participates in ATP binding.

It belongs to the formate--tetrahydrofolate ligase family.

It carries out the reaction (6S)-5,6,7,8-tetrahydrofolate + formate + ATP = (6R)-10-formyltetrahydrofolate + ADP + phosphate. It functions in the pathway one-carbon metabolism; tetrahydrofolate interconversion. The sequence is that of Formate--tetrahydrofolate ligase 2 from Streptococcus pyogenes serotype M6 (strain ATCC BAA-946 / MGAS10394).